A 284-amino-acid polypeptide reads, in one-letter code: Pseudopaline exporter CntI (284 aa).

10 helical membrane-spanning segments follow: residues 2–22, 34–54, 74–94, 96–116, 122–142, 147–167, 179–199, 209–229, 236–256, and 259–279; these read VLDL…TFSV, LPAA…IYLL, GVMG…IPLA, ASIL…LFLG, AVYW…KPFS, SVYA…SVAI, IVFY…WNDF, GLLL…TRAF, IVAV…WLFW, and VPDA…IALS. EamA domains are found at residues 8-138 and 151-279; these read SGVL…LMIV and VVGL…IALS.

It belongs to the EamA transporter family.

It localises to the cell inner membrane. In terms of biological role, transports the metallophore pseudopaline, which is involved in the acquisition of nickel and zinc, and thus enables bacterial growth inside the host, where metal access is limited. Is probably involved in the export of pseudopaline. Essential for iron acquisition during the interaction with airway mucus secretions (AMS). This chain is Pseudopaline exporter CntI, found in Pseudomonas aeruginosa (strain ATCC 15692 / DSM 22644 / CIP 104116 / JCM 14847 / LMG 12228 / 1C / PRS 101 / PAO1).